The sequence spans 324 residues: tRNA pseudouridine synthase B (324 aa).

The active-site Nucleophile is aspartate 49.

This sequence belongs to the pseudouridine synthase TruB family. Type 1 subfamily.

The catalysed reaction is uridine(55) in tRNA = pseudouridine(55) in tRNA. In terms of biological role, responsible for synthesis of pseudouridine from uracil-55 in the psi GC loop of transfer RNAs. The polypeptide is tRNA pseudouridine synthase B (Brucella anthropi (strain ATCC 49188 / DSM 6882 / CCUG 24695 / JCM 21032 / LMG 3331 / NBRC 15819 / NCTC 12168 / Alc 37) (Ochrobactrum anthropi)).